We begin with the raw amino-acid sequence, 1468 residues long: DNA polymerase alpha catalytic subunit A (1468 aa).

Over residues 1–12 (MSSKSEKLEKLR) the composition is skewed to basic and acidic residues. 3 disordered regions span residues 1 to 34 (MSSK…SDGD), 71 to 135 (GVEE…KKSI), and 166 to 205 (NLNS…PDSS). Position 2 is an N-acetylserine (Ser-2). Ser-31 carries the post-translational modification Phosphoserine. The segment covering 71 to 80 (GVEEDWREVD) has biased composition (basic and acidic residues). Residues Ser-82, Ser-83, Ser-84, Ser-169, and Ser-170 each carry the phosphoserine modification. Residues 166–176 (NLNSSPTSEFK) show a composition bias toward polar residues. Position 172 is a phosphothreonine (Thr-172). Basic and acidic residues predominate over residues 183–205 (NGNDESSHDAGISKKVKIDPDSS). Phosphoserine occurs at positions 240 and 274. The disordered stretch occupies residues 256–275 (LANPPSAQSLADEEDDEDSD). Over residues 266 to 275 (ADEEDDEDSD) the composition is skewed to acidic residues. A phosphothreonine mark is found at Thr-309 and Thr-313. Residues 813–837 (PDKEGNRSRAQKQRQNEENADAPVN) form a disordered region. The DNA-binding stretch occupies residues 1246-1381 (KKYFRREGGN…CTGVMRYKYS (136 aa)). Zn(2+) is bound by residues Cys-1287, Cys-1290, Cys-1314, Cys-1317, Cys-1348, Cys-1353, Cys-1367, and Cys-1372. Residues 1287 to 1317 (CPSCDKRFPFGGIVSSNYYRVSYNGLQCKHC) form a CysA-type zinc finger. A CysB motif motif is present at residues 1348 to 1372 (CDDSTCGIVTRQVSVFGKRCLNDGC).

This sequence belongs to the DNA polymerase type-B family. In terms of assembly, DNA polymerase alpha:primase is a four subunit enzyme complex, which is assembled throughout the cell cycle, and consists of the two DNA polymerase subunits A POL1 and B POL12, and the DNA primase large PRI2 and small PRI1 subunits. Subunit B POL12 binds to subunit A POL1. POL1 interacts with CDC13, POB3, SPT16 and MCM10.

The protein resides in the nucleus. The catalysed reaction is DNA(n) + a 2'-deoxyribonucleoside 5'-triphosphate = DNA(n+1) + diphosphate. Its function is as follows. Catalytic component of DNA polymerase alpha, which in complex with DNA primase (DNA polymerase alpha:primase) constitutes a replicative polymerase. POL1 has a role in promoting telomere replication during interaction with CDC13. The protein is DNA polymerase alpha catalytic subunit A (POL1) of Saccharomyces cerevisiae (strain ATCC 204508 / S288c) (Baker's yeast).